The following is a 593-amino-acid chain: Lipolysis-stimulated lipoprotein receptor (593 aa).

A signal peptide spans 1 to 35 (MAPAAGACAGAPDSHPATVVFVCLFLIIFCPDPAS). Residues 36-206 (AIQVTVSDPY…PGFRAGPLED (171 aa)) are Extracellular-facing. The Ig-like V-type domain maps to 89 to 181 (PASVDNQLNA…DLDGNNEAYA (93 aa)). The cysteines at positions 113 and 165 are disulfide-linked. Residues 207–227 (WLFVVVVCLASLLLFLLLGIC) form a helical membrane-spanning segment. The Cytoplasmic portion of the chain corresponds to 228 to 593 (WCQCCPHTCC…LALSRESLVV (366 aa)). Thr-283 carries the phosphothreonine modification. 5 positions are modified to phosphoserine: Ser-308, Ser-314, Ser-332, Ser-375, and Ser-379. Basic and acidic residues predominate over residues 375–387 (SEVTSLHEDDWRS). The interval 375–578 (SEVTSLHEDD…ETDSQASRER (204 aa)) is disordered. Thr-396 is modified (phosphothreonine). Residues Ser-407, Ser-410, and Ser-436 each carry the phosphoserine modification. A compositionally biased stretch (basic and acidic residues) spans 435–444 (RSVDALDDIN). Residues 445–460 (RPGSTESGRSSPPSSG) show a composition bias toward low complexity. Residues Ser-471 and Ser-473 each carry the phosphoserine modification. Positions 472 to 550 (RSRDDLYDPD…GSGERRRVYR (79 aa)) are enriched in basic and acidic residues. At Tyr-478 the chain carries Phosphotyrosine. Position 575 is a phosphoserine (Ser-575). Lys-582 is covalently cross-linked (Glycyl lysine isopeptide (Lys-Gly) (interchain with G-Cter in ubiquitin)). Phosphoserine occurs at positions 587 and 590.

The protein belongs to the immunoglobulin superfamily. LISCH7 family. Homotrimer or homotetramer constituted of isoform 1 and/or isoform 2 and isoform 3. Assembles into cell-cell contacts. Interacts (via the cytoplasmic domain) with MARVELD2 (via C-terminal cytoplasmic domain); the interaction is required to recruit MARVELD2 to tricellular contacts. Interacts with OCLN. Post-translationally, phosphorylation at Ser-308 by MAPK8/JNK1 and MAPK9/JNK2 may be required for exclusive localization at tricellular tight junstions. In terms of processing, polyubiquitinated at Lys-582 via 'Lys-63'-linked ubiquitin chains; deubiquitinated by USP53. Specifically expressed in liver. Also detected in kidney and lung.

It localises to the cell membrane. Its subcellular location is the cell junction. The protein localises to the tight junction. Its function is as follows. Probable role in the clearance of triglyceride-rich lipoprotein from blood. Binds chylomicrons, LDL and VLDL in presence of free fatty acids and allows their subsequent uptake in the cells. Maintains epithelial barrier function by recruiting MARVELD2/tricellulin to tricellular tight junctions. This chain is Lipolysis-stimulated lipoprotein receptor, found in Rattus norvegicus (Rat).